We begin with the raw amino-acid sequence, 295 residues long: Craniofacial development protein 1 (295 aa).

Acidic residues-rich tracts occupy residues 1–18 (MEEFDSEDFSTSDEDEDY) and 25–43 (YSEDDVNELVKEDEVDGEE). Disordered regions lie at residues 1-155 (MEEF…KPKE) and 188-219 (FLKQTEKEKPQALVTSAATPPPAGSGIKRTSG). Residues 49–65 (KGKRRKAQSIPARKRKQ) are compositionally biased toward basic residues. The span at 70 to 93 (LDEEEDGEEDSGGSSREEDEEEQE) shows a compositional bias: acidic residues. Phosphoserine occurs at positions 80, 83, 84, and 112. Over residues 120-130 (KSKAASSSQVK) the composition is skewed to low complexity. Basic and acidic residues-rich tracts occupy residues 145-155 (VKADELEKPKE) and 188-197 (FLKQTEKEKP). Lys-146 participates in a covalent cross-link: Glycyl lysine isopeptide (Lys-Gly) (interchain with G-Cter in SUMO2). The tract at residues 174 to 213 (VTKEVDATSKEAKSFLKQTEKEKPQALVTSAATPPPAGSG) is hydrophilic. Phosphoserine is present on Ser-212. One can recognise a BCNT-C domain in the interval 214 to 295 (IKRTSGMSSL…RDLRLSKMKP (82 aa)). Lys-215 bears the N6-methyllysine mark. Ser-246 carries the phosphoserine modification.

It localises to the chromosome. The protein resides in the centromere. Its subcellular location is the kinetochore. In terms of biological role, may play a role during embryogenesis. This is Craniofacial development protein 1 (Cfdp1) from Rattus norvegicus (Rat).